The primary structure comprises 456 residues: Argininosuccinate lyase (456 aa).

The protein belongs to the lyase 1 family. Argininosuccinate lyase subfamily.

Its subcellular location is the cytoplasm. It catalyses the reaction 2-(N(omega)-L-arginino)succinate = fumarate + L-arginine. Its pathway is amino-acid biosynthesis; L-arginine biosynthesis; L-arginine from L-ornithine and carbamoyl phosphate: step 3/3. This chain is Argininosuccinate lyase, found in Shewanella woodyi (strain ATCC 51908 / MS32).